We begin with the raw amino-acid sequence, 329 residues long: MSSLRLRLKYENQSAVETVEANATVGSFLDLVAAKFSLPRNSIALKFGFPPQDIPLVNSDVPLSTLVSSGQQILVLKNAATSFSTNEPAKPPIPNAATKPTFPPQTEISNPPAVSHQSKNTSQDPPYVSTPIGDIALRVMPDDNSCLFRALSKPLGFSPYELREIVANQVLSNPDIYSTAILGKPSIEYASWIRKETSWGGYIELSILSSHFGVEICSVDVKTGRVDSYNPQPATGQRTYIVYSGIHYDLAALAAVLWDTDVDVVLFDASDVTITPYVQQLASLLKNMHYYTDTASFSIRCTICGTGLVGEKDATAHALATGHTQFGEY.

The segment at 7 to 89 (RLKYENQSAV…ATSFSTNEPA (83 aa)) is UBX-like. Residues 85–127 (TNEPAKPPIPNAATKPTFPPQTEISNPPAVSHQSKNTSQDPPY) are disordered. Polar residues predominate over residues 115 to 124 (SHQSKNTSQD). The OTU domain occupies 135 to 254 (IALRVMPDDN…GIHYDLAALA (120 aa)). The interval 140 to 146 (MPDDNSC) is cys-loop. The active site involves D143. Catalysis depends on C146, which acts as the Nucleophile. A variable-loop region spans residues 193–203 (IRKETSWGGYI). The tract at residues 243-247 (YSGIH) is his-loop. I246 provides a ligand contact to substrate. The active site involves H247. Residues 272–277 (VTITPY) are S2 site. A C2H2-type zinc finger spans residues 299-323 (IRCTICGTGLVGEKDATAHALATGH). H323 is an active-site residue.

Its subcellular location is the cytoplasm. The protein resides in the nucleus. The enzyme catalyses Thiol-dependent hydrolysis of ester, thioester, amide, peptide and isopeptide bonds formed by the C-terminal Gly of ubiquitin (a 76-residue protein attached to proteins as an intracellular targeting signal).. Hydrolase that can remove conjugated ubiquitin from proteins and may therefore play an important regulatory role at the level of protein turnover by preventing degradation. Has a role in meiosis. The sequence is that of Putative ubiquitin thioesterase otu1 (otu1) from Schizosaccharomyces pombe (strain 972 / ATCC 24843) (Fission yeast).